We begin with the raw amino-acid sequence, 406 residues long: Olfactomedin-like protein 3 (406 aa).

The signal sequence occupies residues 1 to 21; that stretch reads MGPSAPLLLFFLLSWPGSLQG. The stretch at 22–101 forms a coiled coil; that stretch reads QQHHLVEYME…REVDYLETQN (80 aa). The Olfactomedin-like domain occupies 134-401; the sequence is DCSYTISQVR…QIVYKLEMKK (268 aa). Cysteines 135 and 328 form a disulfide. An N-linked (GlcNAc...) asparagine glycan is attached at Asn248.

The protein belongs to the OLFML3 family.

It localises to the secreted. Its function is as follows. Secreted scaffold protein that plays an essential role in dorsoventral patterning during early development. Stabilizes axial formation by restricting chordin (CHRD) activity on the dorsal side. Acts by facilitating the association between the tolloid proteases and their substrate chordin (CHRD), leading to enhance chordin (CHRD) degradation. May have matrix-related function involved in placental and embryonic development, or play a similar role in other physiological processes. The chain is Olfactomedin-like protein 3 (Olfml3) from Rattus norvegicus (Rat).